Here is a 100-residue protein sequence, read N- to C-terminus: MITLTHYLILSAILFSIALVGILRRKNLLMLFFATEIALNAVNIALAAFSKYYGDLTGQLFAFFIIAIAASEVAVGLGLLIIWYKRRGTIDLDSLQSMNG.

3 helical membrane passes run 2-22 (ITLT…LVGI), 29-49 (LMLF…LAAF), and 63-83 (FFII…LIIW).

Belongs to the complex I subunit 4L family. In terms of assembly, NDH-1 is composed of 14 different subunits. Subunits NuoA, H, J, K, L, M, N constitute the membrane sector of the complex.

Its subcellular location is the cell inner membrane. The catalysed reaction is a quinone + NADH + 5 H(+)(in) = a quinol + NAD(+) + 4 H(+)(out). Functionally, NDH-1 shuttles electrons from NADH, via FMN and iron-sulfur (Fe-S) centers, to quinones in the respiratory chain. The immediate electron acceptor for the enzyme in this species is believed to be ubiquinone. Couples the redox reaction to proton translocation (for every two electrons transferred, four hydrogen ions are translocated across the cytoplasmic membrane), and thus conserves the redox energy in a proton gradient. The chain is NADH-quinone oxidoreductase subunit K from Nitratiruptor sp. (strain SB155-2).